The sequence spans 67 residues: uncharacterized protein (67 aa).

The next 2 helical transmembrane spans lie at 10-30 and 40-60; these read EFFIYIFLFIDKTNVESITMW and LMVGVWIVILFLTWFLLWMVF.

This sequence belongs to the plectrovirus ORF10 family.

Its subcellular location is the host membrane. This is an uncharacterized protein from Spiroplasma citri (SpV1).